The sequence spans 332 residues: Putative D-threonate 4-phosphate dehydrogenase (332 aa).

Residues His-138 and Thr-139 each contribute to the substrate site. His-168, His-211, and His-266 together coordinate a divalent metal cation. The substrate site is built by Lys-274 and Arg-292.

It belongs to the PdxA family. PdxA2 subfamily. Homodimer. The cofactor is a divalent metal cation.

It catalyses the reaction 4-O-phospho-D-threonate + NAD(+) = dihydroxyacetone phosphate + CO2 + NADH. Catalyzes the NAD-dependent oxidation and subsequent decarboxylation of D-threonate 4-phosphate to produce dihydroxyacetone phosphate (DHAP). The protein is Putative D-threonate 4-phosphate dehydrogenase of Fusobacterium nucleatum subsp. nucleatum (strain ATCC 25586 / DSM 15643 / BCRC 10681 / CIP 101130 / JCM 8532 / KCTC 2640 / LMG 13131 / VPI 4355).